Here is a 99-residue protein sequence, read N- to C-terminus: Large ribosomal subunit protein uL23 (99 aa).

In terms of assembly, contacts protein L29, and trigger factor when it is bound to the ribosome. Part of the 50S ribosomal subunit.

One of the early assembly proteins it binds 23S rRNA. One of the proteins that surrounds the polypeptide exit tunnel on the outside of the ribosome. Forms the main docking site for trigger factor binding to the ribosome. The protein is Large ribosomal subunit protein uL23 of Rhodopseudomonas palustris (strain ATCC BAA-98 / CGA009).